Consider the following 276-residue polypeptide: MSEEVTYATLTFQDSAGARNNRDGNNLRKRGHPAPSPIWRHAALGLVTLCLMLLIGLVTLGMMFLQISNDINSDSEKLSQLQKTIQQQQDNLSQQLGNSNNLSMEEEFLKSQISSVLKRQEQMAIKLCQELIIHTSDHRCNPCPKMWQWYQNSCYYFTTNEEKTWANSRKDCIDKNSTLVKIDSLEEKDFLMSQPLLMFSFFWLGLSWDSSGRSWFWEDGSVPSPSLFSTKELDQINGSKGCAYFQKGNIYISRCSAEIFWICEKTAAPVKTEDLD.

Residues 1–43 (MSEEVTYATLTFQDSAGARNNRDGNNLRKRGHPAPSPIWRHAA) are Cytoplasmic-facing. The ITIM motif motif lies at 5-10 (VTYATL). Position 7 is a phosphotyrosine (Y7). The chain crosses the membrane as a helical; Signal-anchor for type II membrane protein span at residues 44-64 (LGLVTLCLMLLIGLVTLGMMF). Over 65–276 (LQISNDINSD…AAPVKTEDLD (212 aa)) the chain is Extracellular. 3 N-linked (GlcNAc...) asparagine glycosylation sites follow: N91, N176, and N237. A C-type lectin domain is found at 150–264 (YQNSCYYFTT…CSAEIFWICE (115 aa)). 2 disulfides stabilise this stretch: C172–C263 and C242–C255.

As to quaternary structure, homodimer. Interacts (via ITIM motif) with PTPN6. Interacts (via ITIM motif) with PTPN11; this interaction triggers dephosphorylation and activation of PTPN11. In terms of processing, N-glycosylated. Detected in colon, heart, kidney, liver, lung, mammary gland, ovary, spleen and testis. Expressed in melanocytes (at protein level).

The protein localises to the cell membrane. Inhibitory receptor postulated to negatively regulate immune and non-immune functions. Upon phosphorylation, recruits SH2 domain-containing PTPN6 and PTPN11 phosphatases to its ITIM motif and antagonizes activation signals. Although it inhibits KLRK1/NKG2D-mediated signaling, it does not bind known ligands of KLRK1/NKG2D and therefore is not its inhibitory counterpart. May limit activation of myeloid cell subsets in response to infection or tissue inflammation. May protect target cells against natural killer cell-mediated lysis. May negatively regulate cell cycle and differentiation of melanocytes via inactivation of STAT3. In Homo sapiens (Human), this protein is C-type lectin domain family 12 member B.